We begin with the raw amino-acid sequence, 528 residues long: Peptide chain release factor 3 (528 aa).

The 269-residue stretch at 11–279 (SDRRTFAIIS…GFVEWAPAPI (269 aa)) folds into the tr-type G domain. GTP contacts are provided by residues 20-27 (SHPDAGKT), 88-92 (DTPGH), and 142-145 (NKMD).

This sequence belongs to the TRAFAC class translation factor GTPase superfamily. Classic translation factor GTPase family. PrfC subfamily.

The protein resides in the cytoplasm. Functionally, increases the formation of ribosomal termination complexes and stimulates activities of RF-1 and RF-2. It binds guanine nucleotides and has strong preference for UGA stop codons. It may interact directly with the ribosome. The stimulation of RF-1 and RF-2 is significantly reduced by GTP and GDP, but not by GMP. In Marinomonas sp. (strain MWYL1), this protein is Peptide chain release factor 3.